Here is a 545-residue protein sequence, read N- to C-terminus: Chaperonin GroEL (545 aa).

ATP-binding positions include 29 to 32 (TMGP), lysine 50, 86 to 90 (DGTTT), glycine 414, 477 to 479 (DAA), and aspartate 493.

The protein belongs to the chaperonin (HSP60) family. As to quaternary structure, forms a cylinder of 14 subunits composed of two heptameric rings stacked back-to-back. Interacts with the co-chaperonin GroES.

It is found in the cytoplasm. It catalyses the reaction ATP + H2O + a folded polypeptide = ADP + phosphate + an unfolded polypeptide.. In terms of biological role, together with its co-chaperonin GroES, plays an essential role in assisting protein folding. The GroEL-GroES system forms a nano-cage that allows encapsulation of the non-native substrate proteins and provides a physical environment optimized to promote and accelerate protein folding. This chain is Chaperonin GroEL, found in Campylobacter jejuni subsp. jejuni serotype O:6 (strain 81116 / NCTC 11828).